A 471-amino-acid polypeptide reads, in one-letter code: Mitochondrial distribution and morphology protein 10 (471 aa).

Disordered stretches follow at residues 272 to 291 (TEMP…SNHG), 374 to 394 (ADTP…DEEN), and 436 to 455 (SWAA…GGVS). Residues 276-288 (SSSSSTSSTTTTS) show a composition bias toward low complexity. Residues 444–455 (AGGGQSVGGGVS) show a composition bias toward gly residues.

It belongs to the MDM10 family. As to quaternary structure, component of the ER-mitochondria encounter structure (ERMES) or MDM complex, composed of mmm1, mdm10, mdm12 and mdm34. Associates with the mitochondrial outer membrane sorting assembly machinery SAM(core) complex.

It localises to the mitochondrion outer membrane. Component of the ERMES/MDM complex, which serves as a molecular tether to connect the endoplasmic reticulum and mitochondria. Components of this complex are involved in the control of mitochondrial shape and protein biogenesis and may function in phospholipid exchange. mdm10 is involved in the late assembly steps of the general translocase of the mitochondrial outer membrane (TOM complex). Functions in the tom40-specific route of the assembly of outer membrane beta-barrel proteins, including the association of tom40 with the receptor tom22 and small TOM proteins. Can associate with the SAM(core) complex as well as the mdm12-mmm1 complex, both involved in late steps of the major beta-barrel assembly pathway, that is responsible for biogenesis of all outer membrane beta-barrel proteins. May act as a switch that shuttles between both complexes and channels precursor proteins into the tom40-specific pathway. Plays a role in mitochondrial morphology and in the inheritance of mitochondria. The sequence is that of Mitochondrial distribution and morphology protein 10 (mdmB) from Neosartorya fischeri (strain ATCC 1020 / DSM 3700 / CBS 544.65 / FGSC A1164 / JCM 1740 / NRRL 181 / WB 181) (Aspergillus fischerianus).